The primary structure comprises 628 residues: DEAD-box ATP-dependent RNA helicase 9 (628 aa).

The short motif at 98 to 126 is the Q motif element; sequence LEVAKLGISPKIVSQLASRGITKLFPIQR. Residues 129–302 enclose the Helicase ATP-binding domain; it reads LEPAMQGKDM…QKYLKNPVTI (174 aa). 142 to 149 contributes to the ATP binding site; the sequence is AKTGTGKT. The DEAD box motif lies at 250-253; that stretch reads DEAD. The Helicase C-terminal domain maps to 331–478; that stretch reads VLGELIKEHA…KINVEGSDLM (148 aa). 2 disordered regions span residues 496–548 and 571–628; these read GSYG…SGFG and SGFG…FGSS. Over residues 500 to 509 the composition is skewed to low complexity; it reads RRGSFGSSSS. Residues 510 to 548 are compositionally biased toward gly residues; that stretch reads RGGGFGDSGFGRSGGGFGRSGGGGFGRSSGGGFGDSGFG.

Belongs to the DEAD box helicase family. DDX21/DDX50 subfamily.

The enzyme catalyses ATP + H2O = ADP + phosphate + H(+). This Oryza sativa subsp. japonica (Rice) protein is DEAD-box ATP-dependent RNA helicase 9.